The following is a 158-amino-acid chain: MAIFEGSFTTASNLKVGIVVARFNDLITNKILSGCLDCLKRHGLDTSETSETLDIVWVPGSFELPIAAKTLLKKSNYDVLISLGAVIRGETSHYDVVISEASKGIAQVSYDYDVPIIFGVLTTDSMQQALERAGIKNNLGWNYALQAIEMGSLIKNLN.

5-amino-6-(D-ribitylamino)uracil is bound by residues phenylalanine 23, 61-63 (SFE), and 85-87 (AVI). (2S)-2-hydroxy-3-oxobutyl phosphate is bound at residue 90 to 91 (ET). The active-site Proton donor is histidine 93. Phenylalanine 118 provides a ligand contact to 5-amino-6-(D-ribitylamino)uracil. Arginine 132 serves as a coordination point for (2S)-2-hydroxy-3-oxobutyl phosphate.

This sequence belongs to the DMRL synthase family.

It carries out the reaction (2S)-2-hydroxy-3-oxobutyl phosphate + 5-amino-6-(D-ribitylamino)uracil = 6,7-dimethyl-8-(1-D-ribityl)lumazine + phosphate + 2 H2O + H(+). It functions in the pathway cofactor biosynthesis; riboflavin biosynthesis; riboflavin from 2-hydroxy-3-oxobutyl phosphate and 5-amino-6-(D-ribitylamino)uracil: step 1/2. In terms of biological role, catalyzes the formation of 6,7-dimethyl-8-ribityllumazine by condensation of 5-amino-6-(D-ribitylamino)uracil with 3,4-dihydroxy-2-butanone 4-phosphate. This is the penultimate step in the biosynthesis of riboflavin. The polypeptide is 6,7-dimethyl-8-ribityllumazine synthase (Prochlorococcus marinus (strain MIT 9515)).